The primary structure comprises 505 residues: Acetylcholine receptor subunit beta (505 aa).

The N-terminal stretch at 1 to 24 (MTPGALLLLLLGVLGAHLAPGARG) is a signal peptide. The Extracellular segment spans residues 25–245 (SEAEGRLREK…VTFYLIIRRK (221 aa)). Cysteines 152 and 166 form a disulfide. Asn-165 carries an N-linked (GlcNAc...) asparagine glycan. 3 helical membrane passes run 246–270 (PLFY…VFYL), 278–295 (MGLS…LLLL), and 312–333 (YLMF…VLNL). The Cytoplasmic portion of the chain corresponds to 334–473 (HHRSPHTHQM…WQFVAMVVDR (140 aa)). Positions 365-391 (KPERDQMQEPPSIAPRDSPGSGWGRGT) are disordered. Tyr-394 is subject to Phosphotyrosine; by Tyr-kinases. A helical membrane pass occupies residues 474 to 492 (LFLWTFIIFTSVGTLVIFL).

Belongs to the ligand-gated ion channel (TC 1.A.9) family. Acetylcholine receptor (TC 1.A.9.1) subfamily. Beta-1/CHRNB1 sub-subfamily. In terms of assembly, pentamer of two alpha chains, and one each of the beta, delta, and gamma (in immature muscle) or epsilon (in mature muscle) chains. The muscle heteropentamer composed of alpha-1, beta-1, delta, epsilon subunits interacts with the alpha-conotoxin ImII.

It is found in the postsynaptic cell membrane. The protein resides in the cell membrane. The enzyme catalyses K(+)(in) = K(+)(out). It carries out the reaction Na(+)(in) = Na(+)(out). Its function is as follows. After binding acetylcholine, the AChR responds by an extensive change in conformation that affects all subunits and leads to opening of an ion-conducting channel across the plasma membrane. The polypeptide is Acetylcholine receptor subunit beta (CHRNB1) (Bos taurus (Bovine)).